Reading from the N-terminus, the 323-residue chain is Protoheme IX farnesyltransferase (323 aa).

The next 8 helical transmembrane spans lie at 28-48 (IIPLLLITTAAAMWIASEGRV), 50-70 (LFTLFITLIGGTLAAAAAQVM), 101-121 (FIFAVILAILSFSLFALFVNL), 122-142 (LSGLLAMSGIVFYMLVYTHLL), 150-170 (IVIGGAAGSIPPLVGWAAVTG), 178-198 (ILFAIIFLWTPPHFWALALMI), 235-255 (FLLVYPLGVSGAVYGGIAIIL), and 282-302 (FSIFYLMLLCTAMVIDSLPLT).

This sequence belongs to the UbiA prenyltransferase family. Protoheme IX farnesyltransferase subfamily.

The protein resides in the cell inner membrane. The catalysed reaction is heme b + (2E,6E)-farnesyl diphosphate + H2O = Fe(II)-heme o + diphosphate. It functions in the pathway porphyrin-containing compound metabolism; heme O biosynthesis; heme O from protoheme: step 1/1. Converts heme B (protoheme IX) to heme O by substitution of the vinyl group on carbon 2 of heme B porphyrin ring with a hydroxyethyl farnesyl side group. This Rippkaea orientalis (strain PCC 8801 / RF-1) (Cyanothece sp. (strain PCC 8801)) protein is Protoheme IX farnesyltransferase.